The sequence spans 214 residues: tRNA (guanine-N(7)-)-methyltransferase (214 aa).

Positions 43, 68, 95, and 117 each coordinate S-adenosyl-L-methionine. Residue D117 is part of the active site. Substrate contacts are provided by residues K121, D153, and T190 to E193.

This sequence belongs to the class I-like SAM-binding methyltransferase superfamily. TrmB family.

It carries out the reaction guanosine(46) in tRNA + S-adenosyl-L-methionine = N(7)-methylguanosine(46) in tRNA + S-adenosyl-L-homocysteine. It participates in tRNA modification; N(7)-methylguanine-tRNA biosynthesis. Catalyzes the formation of N(7)-methylguanine at position 46 (m7G46) in tRNA. The protein is tRNA (guanine-N(7)-)-methyltransferase of Staphylococcus aureus (strain MSSA476).